The sequence spans 938 residues: Ubiquitin carboxyl-terminal hydrolase Usp2 (938 aa).

6 disordered regions span residues 1–53, 91–117, 130–254, 273–297, 360–410, and 500–610; these read MMLD…KVGA, KVKT…NTSR, FNGN…ISTT, EQNQ…HRYP, LSGQ…NLQQ, and KDAT…EKSE. Residues 22–36 are compositionally biased toward low complexity; it reads STTKTSSVVATSASS. Composition is skewed to low complexity over residues 137 to 158, 167 to 177, 198 to 227, and 275 to 289; these read TTTN…NTSN, STTATATSTST, MNGH…QRQQ, and NQVQ…PSSS. Residues 392–410 are compositionally biased toward polar residues; it reads ASRSNHGSQAGGSSSNLQQ. Composition is skewed to low complexity over residues 502–555 and 574–583; these read ATTA…TARS and TSRSSIGTSS. Residues 592 to 610 show a composition bias toward basic and acidic residues; it reads HNSDDGYKTASSSRDEKSE. In terms of domain architecture, USP spans 613-938; it reads CGLRNIGNTC…SAYILFYERT (326 aa). Residue cysteine 622 is the Nucleophile of the active site. Positions 765, 768, 814, and 817 each coordinate Zn(2+). Histidine 895 serves as the catalytic Proton acceptor.

The protein belongs to the peptidase C19 family. Interacts (via N-terminus) with imd (via N-terminus). Interacts with Rpt6.

The catalysed reaction is Thiol-dependent hydrolysis of ester, thioester, amide, peptide and isopeptide bonds formed by the C-terminal Gly of ubiquitin (a 76-residue protein attached to proteins as an intracellular targeting signal).. In terms of biological role, hydrolase that deubiquitinates polyubiquitinated target proteins. Required for preventing the activation of the Toll signaling cascades under unchallenged conditions. Essential for bodily calcium homeostasis. Functionally, required for preventing the activation of the immune deficiency (Imd) signaling cascade under unchallenged conditions. Regulates the Imd pathway by specifically removing 'Lys-48'-linked ubiquitin from imd. Also promotes imd degradation probably by binding to imd and enhancing its association with the proteasome. The polypeptide is Ubiquitin carboxyl-terminal hydrolase Usp2 (Drosophila melanogaster (Fruit fly)).